The sequence spans 465 residues: Lactaldehyde dehydrogenase (465 aa).

220–225 serves as a coordination point for NAD(+); it reads GSVEVG. Catalysis depends on residues glutamate 240 and cysteine 274.

The protein belongs to the aldehyde dehydrogenase family. As to quaternary structure, homotetramer.

The enzyme catalyses (S)-lactaldehyde + NAD(+) + H2O = (S)-lactate + NADH + 2 H(+). It participates in cofactor biosynthesis; coenzyme F420 biosynthesis. Functionally, involved in F420 biosynthesis through the oxidation of lactaldehyde to lactate. The protein is Lactaldehyde dehydrogenase of Methanococcus maripaludis (strain DSM 14266 / JCM 13030 / NBRC 101832 / S2 / LL).